The following is a 1190-amino-acid chain: DNA-directed RNA polymerase subunit beta (1190 aa).

This sequence belongs to the RNA polymerase beta chain family. As to quaternary structure, the RNAP catalytic core consists of 2 alpha, 1 beta, 1 beta' and 1 omega subunit. When a sigma factor is associated with the core the holoenzyme is formed, which can initiate transcription.

It catalyses the reaction RNA(n) + a ribonucleoside 5'-triphosphate = RNA(n+1) + diphosphate. Functionally, DNA-dependent RNA polymerase catalyzes the transcription of DNA into RNA using the four ribonucleoside triphosphates as substrates. This Geobacillus thermodenitrificans (strain NG80-2) protein is DNA-directed RNA polymerase subunit beta.